A 405-amino-acid polypeptide reads, in one-letter code: Probable tRNA sulfurtransferase (405 aa).

The THUMP domain maps to 60 to 165; it reads QEVSASLKKI…PDAAYISHEE (106 aa). ATP contacts are provided by residues 183–184, 208–209, Arg265, Gly287, and Gln296; these read ML and HF.

This sequence belongs to the ThiI family.

It is found in the cytoplasm. The catalysed reaction is [ThiI sulfur-carrier protein]-S-sulfanyl-L-cysteine + a uridine in tRNA + 2 reduced [2Fe-2S]-[ferredoxin] + ATP + H(+) = [ThiI sulfur-carrier protein]-L-cysteine + a 4-thiouridine in tRNA + 2 oxidized [2Fe-2S]-[ferredoxin] + AMP + diphosphate. The enzyme catalyses [ThiS sulfur-carrier protein]-C-terminal Gly-Gly-AMP + S-sulfanyl-L-cysteinyl-[cysteine desulfurase] + AH2 = [ThiS sulfur-carrier protein]-C-terminal-Gly-aminoethanethioate + L-cysteinyl-[cysteine desulfurase] + A + AMP + 2 H(+). It functions in the pathway cofactor biosynthesis; thiamine diphosphate biosynthesis. Its function is as follows. Catalyzes the ATP-dependent transfer of a sulfur to tRNA to produce 4-thiouridine in position 8 of tRNAs, which functions as a near-UV photosensor. Also catalyzes the transfer of sulfur to the sulfur carrier protein ThiS, forming ThiS-thiocarboxylate. This is a step in the synthesis of thiazole, in the thiamine biosynthesis pathway. The sulfur is donated as persulfide by IscS. The sequence is that of Probable tRNA sulfurtransferase from Streptococcus suis (strain 98HAH33).